A 67-amino-acid chain; its full sequence is MPQRFSRVLIPQPRSRFVRLRCPDCGNEQVTFSHAAMVVRCLVCGRVLAQPTGGKAIFAGHVVKVLE.

4 residues coordinate Zn(2+): Cys22, Cys25, Cys41, and Cys44. The C4-type zinc finger occupies 22-44 (CPDCGNEQVTFSHAAMVVRCLVC).

Belongs to the eukaryotic ribosomal protein eS27 family. Part of the 30S ribosomal subunit. Requires Zn(2+) as cofactor.

This is Small ribosomal subunit protein eS27 from Pyrobaculum calidifontis (strain DSM 21063 / JCM 11548 / VA1).